The sequence spans 236 residues: tRNA (guanine-N(1)-)-methyltransferase (236 aa).

Residues Gly-116 and 136 to 141 contribute to the S-adenosyl-L-methionine site; that span reads LGDFVL.

Belongs to the RNA methyltransferase TrmD family. Homodimer.

It is found in the cytoplasm. The catalysed reaction is guanosine(37) in tRNA + S-adenosyl-L-methionine = N(1)-methylguanosine(37) in tRNA + S-adenosyl-L-homocysteine + H(+). Specifically methylates guanosine-37 in various tRNAs. The polypeptide is tRNA (guanine-N(1)-)-methyltransferase (Thiobacillus denitrificans (strain ATCC 25259 / T1)).